Reading from the N-terminus, the 258-residue chain is Acidic leucine-rich nuclear phosphoprotein 32 family member E (258 aa).

N-acetylmethionine is present on methionine 1. LRR repeat units lie at residues 18-38, 43-64, 65-87, and 89-110; these read EVTE…EGLN, ELEF…PSLN, KLRK…AEKC, and NLTY…EALQ. Lysine 68 participates in a covalent cross-link: Glycyl lysine isopeptide (Lys-Gly) (interchain with G-Cter in SUMO2). The region spanning 123–161 is the LRRCT domain; that stretch reads CEITNLEDYRESIFELLQQITYLDGFDQEDNEAPDSEEE. Acidic residues-rich tracts occupy residues 149-206 and 216-238; these read DQED…EEEV and IQDE…EEEE. Residues 149–258 are disordered; sequence DQEDNEAPDS…AEDDGEEDDD (110 aa). The interval 205–258 is ZID domain; that stretch reads EVGLSYLMKEEIQDEEDDDDYVDEGEEEEEEEEEGPRGEKRKRDAEDDGEEDDD. Residues 239-249 are compositionally biased toward basic and acidic residues; that stretch reads GPRGEKRKRDA.

The protein belongs to the ANP32 family. Component of a SWR1-like complex, composed of EP400, KAT5/TIP60, TRRAP, BRD8, RUVBL1, RUVBL2, ING3 and ANP32E; the complex does not contain SRCAP. Interacts with H2A.Z/H2AZ1. Interacts with the importin alpha KPNA1 and KPNA2. Post-translationally, phosphorylated. The phosphorylation is nuclear localization signal (NLS)-dependent.

The protein localises to the cytoplasm. The protein resides in the nucleus. Its function is as follows. Histone chaperone that specifically mediates the genome-wide removal of histone H2A.Z/H2AZ1 from the nucleosome: removes H2A.Z/H2AZ1 from its normal sites of deposition, especially from enhancer and insulator regions. Not involved in deposition of H2A.Z/H2AZ1 in the nucleosome. May stabilize the evicted H2A.Z/H2AZ1-H2B dimer, thus shifting the equilibrium towards dissociation and the off-chromatin state. Inhibits activity of protein phosphatase 2A (PP2A). Does not inhibit protein phosphatase 1. May play a role in cerebellar development and synaptogenesis. The protein is Acidic leucine-rich nuclear phosphoprotein 32 family member E (Anp32e) of Rattus norvegicus (Rat).